Reading from the N-terminus, the 111-residue chain is Ig kappa chain V-III region PC 2880/PC 1229 (111 aa).

The framework-1 stretch occupies residues 1–23 (DIVLTQSPASLAVSLGQRATISC). C23 and C92 form a disulfide bridge. The interval 24 to 38 (RASESVDNYGISFMN) is complementarity-determining-1. Residues 39–53 (WFQQKPGQPPKLLIY) form a framework-2 region. The interval 54–60 (AASNQGS) is complementarity-determining-2. Residues 61-92 (GVPARFSGSGSGTDFSLNIHPMEEDDTAMYFC) are framework-3. The interval 93–101 (QQSKEVPWT) is complementarity-determining-3. Residues 102-111 (FGGGTKLEIK) form a framework-4 region.

This Mus musculus (Mouse) protein is Ig kappa chain V-III region PC 2880/PC 1229.